We begin with the raw amino-acid sequence, 520 residues long: Trichothecene O-acetyltransferase TRI3 (520 aa).

The disordered stretch occupies residues 1–23 (MGSKLPELPKLSPEKHRWEKSNV). The span at 12-23 (SPEKHRWEKSNV) shows a compositional bias: basic and acidic residues.

It belongs to the trichothecene O-acetyltransferase family.

The protein operates within sesquiterpene biosynthesis; trichothecene biosynthesis. In terms of biological role, trichothecene O-acetyltransferase; part of the gene cluster that mediates the production of the antimicrobial trichothecene harzianum A (HA) that plays a role in Botrytis cinerea antagonistic activity and plant defense priming. The biosynthesis of harzianum A begins with the cyclization of farnesyl diphosphate to trichodiene and is catalyzed by the trichodiene synthase TRI5. Trichodiene undergoes a series of oxygenations catalyzed by the cytochrome P450 monooxygenase TRI4. TRI4 controls the addition of 3 oxygens at C-2, C-11, and the C-12, C-13-epoxide to form the intermediate isotrichodiol. Isotrichodiol then undergoes a non-enzymatic isomerization and cyclization to form 12,13-epoxytrichothec-9-ene (EPT) which is further converted to trichodermol by the cytochrome P450 monooxygenase TRI11 via C-4 hydroxylation. The last step of HA synthesis is esterification of an octatriendioyl moiety to the C-4 oxygen of trichodermol. The octatriendioyl moiety is probably produced by the polyketide synthase TRI17 and the esterification performed by the trichothecene O-acetyltransferase TRI3. The protein is Trichothecene O-acetyltransferase TRI3 of Trichoderma arundinaceum.